We begin with the raw amino-acid sequence, 589 residues long: MTRTTRIDTQEATKHKDLPPVPSPLSLSSNPNPECLMESKSLGRKNFKKLSLDASPVKSTSGSLRSSDMMSIKEPTSLRQKRQRPPPILHLPTASSSATSTPTSNITGSSSASSIQFAQKSPGSGVIVSQTLSRPSSAGGIPSSGYSSLNVNQSNRNVDPDNVVSTDMILNQISNLDLTSMNHHRQHYQNSHHHLPTTNRKRQTVISSISPTKSSAASSPLEPQIQSLPASSQSPIATTSALKLNNKDLLTLKQLGSGNSGSVSKILHIPTQKTMAKKIIHIDSKSVIQTQIIRELRILHECHSPYIIEFYGACLNNNNTIVICMEYCNCGSLDKILPLCENKQFPTFVLKKLSFAILSGLTYLYTTHKIIHRDIKPNNVLMTHKGEFKLCDFGVSRELTNSLAMADTFVGTSMYMSPERIQGLDYGVKSDVWSTGLMLIELASGVPVWSEDDNNNDDDEDDEDDAYVRQGSIAAERNGQNSPSRSRKNKQKGNGYNSYNGPEGILDLLQRIVNEDAPTLTNKINPVTKLPYDKYLCQFIDLCLIKDDSVRKTPWQLLEDKEHFFKGVEEGVYDKEHKSWAKKIRKCKV.

A compositionally biased stretch (basic and acidic residues) spans Met1 to Leu18. Disordered regions lie at residues Met1–Asn162 and Arg185–Ser232. The span at Pro24–Pro33 shows a compositional bias: low complexity. The segment covering Val57 to Met69 has biased composition (polar residues). The segment covering Pro92–Ser121 has biased composition (low complexity). Polar residues-rich tracts occupy residues Ile127–Ser136 and Ser144–Asn162. The segment covering Arg185 to Gln203 has biased composition (basic residues). Residues Ile206–Pro220 show a composition bias toward low complexity. Residues Leu249–Phe565 form the Protein kinase domain. Residues Leu255–Val263 and Lys278 contribute to the ATP site. Asp374 functions as the Proton acceptor in the catalytic mechanism. Ser402 carries the post-translational modification Phosphoserine. Thr408 carries the post-translational modification Phosphothreonine. The tract at residues Ile473–Tyr499 is disordered.

It belongs to the protein kinase superfamily. STE Ser/Thr protein kinase family. MAP kinase kinase subfamily.

The catalysed reaction is L-seryl-[protein] + ATP = O-phospho-L-seryl-[protein] + ADP + H(+). It catalyses the reaction L-threonyl-[protein] + ATP = O-phospho-L-threonyl-[protein] + ADP + H(+). It carries out the reaction L-tyrosyl-[protein] + ATP = O-phospho-L-tyrosyl-[protein] + ADP + H(+). The sequence is that of Serine/threonine-protein kinase STE7 homolog (HST7) from Candida albicans (strain WO-1) (Yeast).